The following is a 35-amino-acid chain: Cupiennin-2e (35 aa).

At Glu35 the chain carries Glutamic acid 1-amide.

Expressed by the venom gland.

Its subcellular location is the secreted. The sequence is that of Cupiennin-2e from Cupiennius salei (American wandering spider).